The following is a 96-amino-acid chain: Small ribosomal subunit protein bS18 (96 aa).

A compositionally biased stretch (basic and acidic residues) spans 1–22 (MYKDIDSHQRDSRTDGHQDGFK). The disordered stretch occupies residues 1–25 (MYKDIDSHQRDSRTDGHQDGFKKNP).

The protein belongs to the bacterial ribosomal protein bS18 family. Part of the 30S ribosomal subunit. Forms a tight heterodimer with protein bS6.

Its function is as follows. Binds as a heterodimer with protein bS6 to the central domain of the 16S rRNA, where it helps stabilize the platform of the 30S subunit. This is Small ribosomal subunit protein bS18 from Borrelia duttonii (strain Ly).